A 503-amino-acid chain; its full sequence is Probable 2-isopropylmalate synthase (503 aa).

The Pyruvate carboxyltransferase domain maps to Ile8 to Phe259. Residues Asp17, His197, His199, and Asn233 each contribute to the a divalent metal cation site.

This sequence belongs to the alpha-IPM synthase/homocitrate synthase family. In terms of assembly, homodimer. A divalent metal cation is required as a cofactor.

The enzyme catalyses 3-methyl-2-oxobutanoate + acetyl-CoA + H2O = (2S)-2-isopropylmalate + CoA + H(+). It participates in amino-acid biosynthesis; L-leucine biosynthesis; L-leucine from 3-methyl-2-oxobutanoate: step 1/4. Its function is as follows. Catalyzes the condensation of the acetyl group of acetyl-CoA with 3-methyl-2-oxobutanoate (2-oxoisovalerate) to form 3-carboxy-3-hydroxy-4-methylpentanoate (2-isopropylmalate). The sequence is that of Probable 2-isopropylmalate synthase (leuA) from Archaeoglobus fulgidus (strain ATCC 49558 / DSM 4304 / JCM 9628 / NBRC 100126 / VC-16).